We begin with the raw amino-acid sequence, 212 residues long: Uracil phosphoribosyltransferase (212 aa).

5-phospho-alpha-D-ribose 1-diphosphate is bound by residues arginine 78, arginine 103, and 130–138 (DPMLATGSS). Uracil is bound by residues isoleucine 193 and 198–200 (GDA). Aspartate 199 is a binding site for 5-phospho-alpha-D-ribose 1-diphosphate.

This sequence belongs to the UPRTase family. Requires Mg(2+) as cofactor.

The enzyme catalyses UMP + diphosphate = 5-phospho-alpha-D-ribose 1-diphosphate + uracil. It participates in pyrimidine metabolism; UMP biosynthesis via salvage pathway; UMP from uracil: step 1/1. Its activity is regulated as follows. Allosterically activated by GTP. Its function is as follows. Catalyzes the conversion of uracil and 5-phospho-alpha-D-ribose 1-diphosphate (PRPP) to UMP and diphosphate. The polypeptide is Uracil phosphoribosyltransferase (Pseudomonas fluorescens (strain SBW25)).